Reading from the N-terminus, the 891-residue chain is Valine--tRNA ligase (891 aa).

The 'HIGH' region motif lies at 43–53 (PFTSGTLHLGH). A 'KMSKS' region motif is present at residues 536-540 (KMSKS). ATP is bound at residue Lys-539.

It belongs to the class-I aminoacyl-tRNA synthetase family. ValS type 2 subfamily.

It is found in the cytoplasm. The enzyme catalyses tRNA(Val) + L-valine + ATP = L-valyl-tRNA(Val) + AMP + diphosphate. In terms of biological role, catalyzes the attachment of valine to tRNA(Val). As ValRS can inadvertently accommodate and process structurally similar amino acids such as threonine, to avoid such errors, it has a 'posttransfer' editing activity that hydrolyzes mischarged Thr-tRNA(Val) in a tRNA-dependent manner. This Pyrococcus horikoshii (strain ATCC 700860 / DSM 12428 / JCM 9974 / NBRC 100139 / OT-3) protein is Valine--tRNA ligase.